A 280-amino-acid polypeptide reads, in one-letter code: MIEVRDLRFHYQEKERAVLDGVSMTLKDGEYVALIGANGCGKTTLVHHLNALMRPTSGVVSVDGLDTLDDRQVWEIRRRVGMVFQNPENQIVGMTIEEDIAFGPGNLGLPPAEIRRRVASSLELVGLESYGRRVPSALSGGEKRLVAIAGILAMEPRYIIFDEPTSYLDPASRQRVLALIAGLHKRGLGIIHITHNMDDILDVDRVLVMREGKIVRDDRPEIVLSQGDWLRQQGLGMPAATALLWRLKEMGVSVRTDILDFEDVCREIAAWKSHPVESVA.

The region spanning 2 to 236 is the ABC transporter domain; that stretch reads IEVRDLRFHY…GDWLRQQGLG (235 aa). ATP is bound at residue 36-43; it reads GANGCGKT.

This sequence belongs to the ABC transporter superfamily. Cobalt importer (TC 3.A.1.18.1) family. As to quaternary structure, forms an energy-coupling factor (ECF) transporter complex composed of an ATP-binding protein (A component, CbiO), a transmembrane protein (T component, CbiQ) and 2 possible substrate-capture proteins (S components, CbiM and CbiN) of unknown stoichimetry.

The protein localises to the cell inner membrane. It participates in cofactor biosynthesis; adenosylcobalamin biosynthesis. Functionally, part of the energy-coupling factor (ECF) transporter complex CbiMNOQ involved in cobalt import. Presumably responsible for energy coupling to the transport system. The chain is Cobalt import ATP-binding protein CbiO from Syntrophus aciditrophicus (strain SB).